A 1755-amino-acid polypeptide reads, in one-letter code: Transposon TyH3 Gag-Pol polyprotein (1755 aa).

Composition is skewed to polar residues over residues 1–23 (MESQQLSQHSPNSHGSACASVTS), 48–60 (TKANSQQTTTPAS), and 127–152 (QSQFPQYPSSVGTPLSTPSPESGNTF). 3 disordered regions span residues 1 to 93 (MESQ…MMTQ), 126 to 173 (PQSQ…RPPP), and 352 to 421 (GSRN…SKST). Residues 153-165 (TDSSSADSDMTST) show a composition bias toward low complexity. An RNA-binding region spans residues 299-401 (NNGIHINNKV…NSKSKTARAH (103 aa)). Residues 402-418 (NVSTSNNSPSTDNDSIS) are compositionally biased toward low complexity. Serine 416 carries the phosphoserine modification. Aspartate 461 functions as the For protease activity; shared with dimeric partner in the catalytic mechanism. The segment at 583–640 (NVHTSESTRKYPYPFIHRMLAHANAQTIRYSLKNNTITYFNESDVDWSSAIDYQCPDC) is integrase-type zinc finger-like. In terms of domain architecture, Integrase catalytic spans 660–835 (NSYEPFQYLH…AGLDISTLLP (176 aa)). Mg(2+) is bound by residues aspartate 671 and aspartate 736. 3 disordered regions span residues 956–1087 (SKAV…ETEK), 1092–1111 (RSPSIDASPPENNSSHNIVP), and 1130–1187 (DLPL…DNET). The segment covering 960-969 (SPTDSTPPST) has biased composition (low complexity). The span at 1005-1015 (STPQISNIEST) shows a compositional bias: polar residues. The segment covering 1038–1053 (ESSHASKSKDFRHSDS) has biased composition (basic and acidic residues). Polar residues-rich tracts occupy residues 1054-1082 (YSENETNHTNVPISSTGGTNNKTVPQISD) and 1101-1111 (PENNSSHNIVP). The short motif at 1178-1212 (KKRSLEDNETEIKVSRDTWNTKNMRSLEPPRSKKR) is the Bipartite nuclear localization signal element. The Reverse transcriptase Ty1/copia-type domain maps to 1338–1476 (NNYYITQLDI…DILGLEIKYQ (139 aa)). The Mg(2+) site is built by aspartate 1346, aspartate 1427, aspartate 1428, aspartate 1610, glutamate 1652, and aspartate 1685. The region spanning 1610-1752 (DASYGNQPYY…IKTFKLLTNK (143 aa)) is the RNase H Ty1/copia-type domain.

The capsid protein forms a homotrimer, from which the VLPs are assembled. The protease is a homodimer, whose active site consists of two apposed aspartic acid residues. Post-translationally, initially, virus-like particles (VLPs) are composed of the structural unprocessed proteins Gag and Gag-Pol, and also contain the host initiator methionine tRNA (tRNA(i)-Met) which serves as a primer for minus-strand DNA synthesis, and a dimer of genomic Ty RNA. Processing of the polyproteins occurs within the particle and proceeds by an ordered pathway, called maturation. First, the protease (PR) is released by autocatalytic cleavage of the Gag-Pol polyprotein yielding capsid protein p45 and a Pol-p154 precursor protein. This cleavage is a prerequisite for subsequent processing of Pol-p154 at the remaining sites to release the mature structural and catalytic proteins. Maturation takes place prior to the RT reaction and is required to produce transposition-competent VLPs.

It localises to the cytoplasm. It is found in the nucleus. It carries out the reaction DNA(n) + a 2'-deoxyribonucleoside 5'-triphosphate = DNA(n+1) + diphosphate. The enzyme catalyses Endonucleolytic cleavage to 5'-phosphomonoester.. Capsid protein (CA) is the structural component of the virus-like particle (VLP), forming the shell that encapsulates the retrotransposons dimeric RNA genome. The particles are assembled from trimer-clustered units and there are holes in the capsid shells that allow for the diffusion of macromolecules. CA also has nucleocapsid-like chaperone activity, promoting primer tRNA(i)-Met annealing to the multipartite primer-binding site (PBS), dimerization of Ty1 RNA and initiation of reverse transcription. Its function is as follows. The aspartyl protease (PR) mediates the proteolytic cleavages of the Gag and Gag-Pol polyproteins after assembly of the VLP. In terms of biological role, reverse transcriptase/ribonuclease H (RT) is a multifunctional enzyme that catalyzes the conversion of the retro-elements RNA genome into dsDNA within the VLP. The enzyme displays a DNA polymerase activity that can copy either DNA or RNA templates, and a ribonuclease H (RNase H) activity that cleaves the RNA strand of RNA-DNA heteroduplexes during plus-strand synthesis and hydrolyzes RNA primers. The conversion leads to a linear dsDNA copy of the retrotransposon that includes long terminal repeats (LTRs) at both ends. Functionally, integrase (IN) targets the VLP to the nucleus, where a subparticle preintegration complex (PIC) containing at least integrase and the newly synthesized dsDNA copy of the retrotransposon must transit the nuclear membrane. Once in the nucleus, integrase performs the integration of the dsDNA into the host genome. The chain is Transposon TyH3 Gag-Pol polyprotein (TY1B) from Saccharomyces cerevisiae (Baker's yeast).